Reading from the N-terminus, the 447-residue chain is Na(+)/H(+) antiporter NhaA 2 (447 aa).

Helical transmembrane passes span 34–54 (VGGVILLVAAAAALIWANSPW), 77–97 (LTLGAWAADGLLAIFFLVVGL), 115–135 (ALPIAAAVGGMVVPALIFVLV), 146–166 (GWAIPTATDIAFAVAVLAVIG), 176–196 (FLLTLAVVDDLLAITVIAVFY), 200–220 (INGLALALAAVPLALFALCVQ), 290–310 (VSAGIAIPVFAFFAAGVSIGG), 321–341 (PITLGIVLGLVLGKPIGIVLT), 359–379 (WVDVVGMSMLAGIGFTVSLLI), and 393–413 (FVKIGVLFGSLLAAGVAAVVL).

The protein belongs to the NhaA Na(+)/H(+) (TC 2.A.33) antiporter family.

Its subcellular location is the cell membrane. The enzyme catalyses Na(+)(in) + 2 H(+)(out) = Na(+)(out) + 2 H(+)(in). In terms of biological role, na(+)/H(+) antiporter that extrudes sodium in exchange for external protons. The sequence is that of Na(+)/H(+) antiporter NhaA 2 from Mycolicibacterium gilvum (strain PYR-GCK) (Mycobacterium gilvum (strain PYR-GCK)).